A 339-amino-acid polypeptide reads, in one-letter code: Heat-inducible transcription repressor HrcA (339 aa).

The protein belongs to the HrcA family.

Negative regulator of class I heat shock genes (grpE-dnaK-dnaJ and groELS operons). Prevents heat-shock induction of these operons. The sequence is that of Heat-inducible transcription repressor HrcA from Methylobacillus flagellatus (strain ATCC 51484 / DSM 6875 / VKM B-1610 / KT).